Reading from the N-terminus, the 390-residue chain is Na(+)/H(+) antiporter NhaA 1 (390 aa).

11 helical membrane-spanning segments follow: residues 14 to 34, 59 to 79, 94 to 114, 125 to 145, 154 to 174, 179 to 199, 205 to 225, 260 to 280, 295 to 315, 328 to 348, and 362 to 382; these read SGIL…NGVL, TILW…GLEL, VALP…IFYV, GWAI…FLLG, LFLL…IAIF, LSII…ILNY, IYIY…SGIH, PIVA…VVFS, IIFG…FLAI, WLHL…SLFI, and ANKI…YFVL.

It belongs to the NhaA Na(+)/H(+) (TC 2.A.33) antiporter family.

The protein resides in the cell inner membrane. It carries out the reaction Na(+)(in) + 2 H(+)(out) = Na(+)(out) + 2 H(+)(in). Its function is as follows. Na(+)/H(+) antiporter that extrudes sodium in exchange for external protons. The chain is Na(+)/H(+) antiporter NhaA 1 from Campylobacter fetus subsp. fetus (strain 82-40).